Here is a 322-residue protein sequence, read N- to C-terminus: Tetraacyldisaccharide 4'-kinase (322 aa).

Ser-54 to Thr-61 contacts ATP.

This sequence belongs to the LpxK family.

The catalysed reaction is a lipid A disaccharide + ATP = a lipid IVA + ADP + H(+). Its pathway is glycolipid biosynthesis; lipid IV(A) biosynthesis; lipid IV(A) from (3R)-3-hydroxytetradecanoyl-[acyl-carrier-protein] and UDP-N-acetyl-alpha-D-glucosamine: step 6/6. Functionally, transfers the gamma-phosphate of ATP to the 4'-position of a tetraacyldisaccharide 1-phosphate intermediate (termed DS-1-P) to form tetraacyldisaccharide 1,4'-bis-phosphate (lipid IVA). The protein is Tetraacyldisaccharide 4'-kinase of Francisella philomiragia subsp. philomiragia (strain ATCC 25017 / CCUG 19701 / FSC 153 / O#319-036).